The primary structure comprises 386 residues: Putrescine N-methyltransferase 4 (386 aa).

3 stretches are compositionally biased toward polar residues: residues 1-14, 23-48, and 57-87; these read MEVISTNTNGSTIF, GHQSGTSKHLNGYQNGTSKHQNGHHN, and HQNGISEHQNGHQNGTSEQQNGTISHDNGNE. Residues 1-87 are disordered; sequence MEVISTNTNG…GTISHDNGNE (87 aa). One can recognise a PABS domain in the interval 97–334; that stretch reads LGWFSEFSAL…GVIGYMLCST (238 aa). S-adenosyl-L-methionine-binding positions include Q128, E203, and 234 to 235; that span reads DG. Catalysis depends on D253, which acts as the Proton acceptor. Y322 contacts S-adenosyl-L-methionine.

This sequence belongs to the class I-like SAM-binding methyltransferase superfamily. Putrescine methyltransferase family. Predominantly expressed in roots.

The catalysed reaction is putrescine + S-adenosyl-L-methionine = N-methylputrescine + S-adenosyl-L-homocysteine + H(+). It functions in the pathway alkaloid biosynthesis; nicotine biosynthesis. Involved in the biosynthesis of pyridine alkaloid natural products, leading mainly to the production of anabasine, anatabine, nicotine and nornicotine, effective deterrents against herbivores with antiparasitic and pesticide properties (neurotoxins); nornicotine serves as the precursor in the synthesis of the carcinogen compound N'-nitrosonornicotine (NNN). Methyltransferase that mediates the conversion of putrescine to N-methylputrescine. Promotes leaves ripening. This chain is Putrescine N-methyltransferase 4, found in Nicotiana tabacum (Common tobacco).